A 631-amino-acid polypeptide reads, in one-letter code: Bromodomain-containing protein 9 (631 aa).

Disordered stretches follow at residues 1-26 (MGKK…PLEK) and 39-116 (VTEL…TLPK). 2 stretches are compositionally biased toward basic and acidic residues: residues 9 to 26 (RPEW…PLEK) and 50 to 63 (SYYD…WERH). A compositionally biased stretch (basic residues) spans 64–73 (KEKKKKKKKK). The segment covering 74-85 (SEKEKYADDDER) has biased composition (basic and acidic residues). Positions 86–96 (RRRKEEKKKKR) are enriched in basic residues. One can recognise a Bromo domain in the interval 166–270 (NEATPHQQLL…HTGFKMMSKQ (105 aa)). Residues 244 to 246 (VYN) form a histone H4K5ac H4K8ac and histone H4K5bu H4K8bu binding region. The segment at 571 to 631 (ASVDRVGSRP…SPEPGSTANS (61 aa)) is disordered. Over residues 581-590 (SSNLSSLSNA) the composition is skewed to low complexity.

As to quaternary structure, binds acetylated histones H3 and H4. Binds butyrylated histone H4.

The protein localises to the nucleus. Plays a role in chromatin remodeling and regulation of transcription. Acts as a chromatin reader that recognizes and binds acylated histones: binds histones that are acetylated and/or butyrylated. In Danio rerio (Zebrafish), this protein is Bromodomain-containing protein 9 (brd9).